A 369-amino-acid chain; its full sequence is Protein-glutamate methylesterase/protein-glutamine glutaminase 1 (369 aa).

Residues 3–120 form the Response regulatory domain; that stretch reads KVVVVDDSAF…SLDIVKIEKD (118 aa). Asp54 is subject to 4-aspartylphosphate. Positions 136–168 are enriched in low complexity; the sequence is RSFRPAPAVRPAAPAALRATPRPSAAPSSAASS. Residues 136 to 174 are disordered; that stretch reads RSFRPAPAVRPAAPAALRATPRPSAAPSSAASSTGTLQV. Residues 177–369 enclose the CheB-type methylesterase domain; sequence GKPVRDVVAI…AQAIMNAVYK (193 aa). Residues Ser189, His216, and Asp312 contribute to the active site.

Belongs to the CheB family. Post-translationally, phosphorylated by CheA. Phosphorylation of the N-terminal regulatory domain activates the methylesterase activity.

Its subcellular location is the cytoplasm. It catalyses the reaction [protein]-L-glutamate 5-O-methyl ester + H2O = L-glutamyl-[protein] + methanol + H(+). The catalysed reaction is L-glutaminyl-[protein] + H2O = L-glutamyl-[protein] + NH4(+). In terms of biological role, involved in chemotaxis. Part of a chemotaxis signal transduction system that modulates chemotaxis in response to various stimuli. Catalyzes the demethylation of specific methylglutamate residues introduced into the chemoreceptors (methyl-accepting chemotaxis proteins or MCP) by CheR. Also mediates the irreversible deamidation of specific glutamine residues to glutamic acid. The protein is Protein-glutamate methylesterase/protein-glutamine glutaminase 1 of Oleidesulfovibrio alaskensis (strain ATCC BAA-1058 / DSM 17464 / G20) (Desulfovibrio alaskensis).